Consider the following 241-residue polypeptide: Thyroid transcription factor 1-associated protein 26 (241 aa).

Disordered regions lie at residues 1–22 (MAPV…GEGV) and 182–205 (KRAA…RQYK). Residues 186-202 (KKQEFERRKQEREEAQR) are compositionally biased toward basic and acidic residues.

Belongs to the TAP26 family. In terms of assembly, interacts with NKX2-1. As to expression, ubiquitously expressed. In lung, expression is restricted to the alveolar epithelial cells.

The protein localises to the nucleus. Functionally, component of the transcription complexes of the pulmonary surfactant-associated protein-B (SFTPB) and -C (SFTPC). Enhances homeobox protein Nkx-2.1-activated SFTPB and SFTPC promoter activities. The chain is Thyroid transcription factor 1-associated protein 26 (CCDC59) from Homo sapiens (Human).